A 195-amino-acid polypeptide reads, in one-letter code: ATP-dependent Clp protease proteolytic subunit 2 (195 aa).

The active-site Nucleophile is the Ser92. Residue His117 is part of the active site.

This sequence belongs to the peptidase S14 family. Fourteen ClpP subunits assemble into 2 heptameric rings which stack back to back to give a disk-like structure with a central cavity, resembling the structure of eukaryotic proteasomes.

It localises to the cytoplasm. The catalysed reaction is Hydrolysis of proteins to small peptides in the presence of ATP and magnesium. alpha-casein is the usual test substrate. In the absence of ATP, only oligopeptides shorter than five residues are hydrolyzed (such as succinyl-Leu-Tyr-|-NHMec, and Leu-Tyr-Leu-|-Tyr-Trp, in which cleavage of the -Tyr-|-Leu- and -Tyr-|-Trp bonds also occurs).. Functionally, cleaves peptides in various proteins in a process that requires ATP hydrolysis. Has a chymotrypsin-like activity. Plays a major role in the degradation of misfolded proteins. This chain is ATP-dependent Clp protease proteolytic subunit 2, found in Rhodococcus jostii (strain RHA1).